A 168-amino-acid chain; its full sequence is Lipoprotein signal peptidase (168 aa).

A run of 4 helical transmembrane segments spans residues 15 to 35, 47 to 67, 75 to 95, and 107 to 127; these read WLWL…IVME, VLPF…SFLS, WLFT…MSKL, and AMII…GFVV. Catalysis depends on residues Asp-128 and Asp-146. Residues 141–161 traverse the membrane as a helical segment; sequence AFNLADTAICLGAAMIILDGF.

This sequence belongs to the peptidase A8 family.

The protein resides in the cell inner membrane. It carries out the reaction Release of signal peptides from bacterial membrane prolipoproteins. Hydrolyzes -Xaa-Yaa-Zaa-|-(S,diacylglyceryl)Cys-, in which Xaa is hydrophobic (preferably Leu), and Yaa (Ala or Ser) and Zaa (Gly or Ala) have small, neutral side chains.. It participates in protein modification; lipoprotein biosynthesis (signal peptide cleavage). Its function is as follows. This protein specifically catalyzes the removal of signal peptides from prolipoproteins. The sequence is that of Lipoprotein signal peptidase from Vibrio vulnificus (strain CMCP6).